We begin with the raw amino-acid sequence, 496 residues long: Probable cytosol aminopeptidase (496 aa).

Mn(2+)-binding residues include lysine 264 and aspartate 269. Lysine 276 is a catalytic residue. The Mn(2+) site is built by aspartate 287, aspartate 346, and glutamate 348. Arginine 350 is an active-site residue.

The protein belongs to the peptidase M17 family. Mn(2+) is required as a cofactor.

The protein localises to the cytoplasm. It catalyses the reaction Release of an N-terminal amino acid, Xaa-|-Yaa-, in which Xaa is preferably Leu, but may be other amino acids including Pro although not Arg or Lys, and Yaa may be Pro. Amino acid amides and methyl esters are also readily hydrolyzed, but rates on arylamides are exceedingly low.. It carries out the reaction Release of an N-terminal amino acid, preferentially leucine, but not glutamic or aspartic acids.. Presumably involved in the processing and regular turnover of intracellular proteins. Catalyzes the removal of unsubstituted N-terminal amino acids from various peptides. The protein is Probable cytosol aminopeptidase of Geobacter sulfurreducens (strain ATCC 51573 / DSM 12127 / PCA).